Consider the following 390-residue polypeptide: Caveolae-associated protein 1 (390 aa).

The residue at position 1 (M1) is an N-acetylmethionine. The disordered stretch occupies residues M1–S40. The required for homotrimerization and for interaction with CAVIN2 and CAVIN3 stretch occupies residues M1 to K98. Residues P22 to S40 show a composition bias toward low complexity. Phosphoserine occurs at positions 36, 40, and 46. Positions V52–I62 are nuclear export signal. Residues L53–L75 form a leucine-zipper 1 region. K116 participates in a covalent cross-link: Glycyl lysine isopeptide (Lys-Gly) (interchain with G-Cter in SUMO2). At S118 the chain carries Phosphoserine. A Glycyl lysine isopeptide (Lys-Gly) (interchain with G-Cter in SUMO2) cross-link involves residue K122. Positions K136–K152 are nuclear localization signal. The residue at position 156 (Y156) is a Phosphotyrosine. K161 is covalently cross-linked (Glycyl lysine isopeptide (Lys-Gly) (interchain with G-Cter in SUMO1); alternate). K161 is covalently cross-linked (Glycyl lysine isopeptide (Lys-Gly) (interchain with G-Cter in SUMO2); alternate). K165 is covalently cross-linked (Glycyl lysine isopeptide (Lys-Gly) (interchain with G-Cter in SUMO2)). The segment at L166–L186 is leucine-zipper 2. A phosphoserine mark is found at S167 and S169. K170 is covalently cross-linked (Glycyl lysine isopeptide (Lys-Gly) (interchain with G-Cter in SUMO2)). A phosphoserine mark is found at S171 and S175. Residues L172 to K181 show a composition bias toward basic and acidic residues. The disordered stretch occupies residues L172 to L201. The segment covering E182–L201 has biased composition (acidic residues). Residues L199–V282 are a coiled coil. 2 positions are modified to phosphoserine: S202 and S203. The segment at K233 to R249 is nuclear localization signal. The segment at L257–L297 is leucine-zipper 3. S300 carries the phosphoserine modification. T302 is subject to Phosphothreonine. Y308 is subject to Phosphotyrosine. Residue K326 forms a Glycyl lysine isopeptide (Lys-Gly) (interchain with G-Cter in SUMO2) linkage. Residues V344–S366 form a disordered region. Residues G352–S365 show a composition bias toward basic and acidic residues. A phosphoserine mark is found at S365, S366, S379, S387, and S389.

Belongs to the CAVIN family. Component of the CAVIN complex composed of CAVIN1, CAVIN2, CAVIN3 and CAVIN4. Homotrimer. Interacts with TTF1. Interacts with RNA polymerase I subunit POLR1A/RPA1. Binds the 3' end of pre-rRNA. Interacts with transcription factor ZNF148. Interacts with LIPE in the adipocyte cytoplasm. Interacts with CAV1 and CAVIN3. Interacts with CAVIN2. Interacts with CAVIN4 and CAV3. Phosphorylated. Present in active and inactive forms. Changes in phosphorylation pattern may alter activity. Phosphorylation at Tyr-156 is essential for its functionin the regulation of ribosomal transcriptional activity. In terms of processing, five truncated forms are found in the caveolae. These are thought to be the result of proteolysis and may be phosphorylation-dependent. Post-translationally, monoubiquitinated.

The protein resides in the membrane. Its subcellular location is the caveola. The protein localises to the cell membrane. It is found in the microsome. It localises to the endoplasmic reticulum. The protein resides in the cytoplasm. Its subcellular location is the cytosol. The protein localises to the mitochondrion. It is found in the nucleus. Functionally, plays an important role in caveolae formation and organization. Essential for the formation of caveolae in all tissues. Core component of the CAVIN complex which is essential for recruitment of the complex to the caveolae in presence of calveolin-1 (CAV1). Essential for normal oligomerization of CAV1. Promotes ribosomal transcriptional activity in response to metabolic challenges in the adipocytes and plays an important role in the formation of the ribosomal transcriptional loop. Dissociates transcription complexes paused by DNA-bound TTF1, thereby releasing both RNA polymerase I and pre-RNA from the template. The caveolae biogenesis pathway is required for the secretion of proteins such as GASK1A. The polypeptide is Caveolae-associated protein 1 (Homo sapiens (Human)).